A 301-amino-acid chain; its full sequence is MSYKKFVYFINLFFLLGATLLTFFLILAGGRTTGVLKNFYWFQASTSGFNSAPSVTRWYNYNWCGWESRGIAVNCSSKMAAQPFSPRDNFGSSPLMPSTFLNNRNAYYYLSRVGWAMLLIGLFFLLITLVSVIASLIRYNRRTAALATAMSWITLFFITLSACLYTGCYAKAVKAFHHENRDARLGPKNFGLIWTTVFLLIVNAICCTIMVATHKRNEYIYDRSFASTKTVDSQTPTPVPTNGGIPSSVPVTEVQQSQSHQNHRFFKKLRTKKRTVTSAGDEPDRVQEERVYTEQNVPVVS.

Residues 1–5 (MSYKK) are Extracellular-facing. The helical transmembrane segment at 6-26 (FVYFINLFFLLGATLLTFFLI) threads the bilayer. At 27-112 (LAGGRTTGVL…NRNAYYYLSR (86 aa)) the chain is on the cytoplasmic side. The chain crosses the membrane as a helical span at residues 113 to 133 (VGWAMLLIGLFFLLITLVSVI). Residues 134–143 (ASLIRYNRRT) lie on the Extracellular side of the membrane. Residues 144–164 (AALATAMSWITLFFITLSACL) traverse the membrane as a helical segment. The Cytoplasmic portion of the chain corresponds to 165–191 (YTGCYAKAVKAFHHENRDARLGPKNFG). Residues 192 to 212 (LIWTTVFLLIVNAICCTIMVA) form a helical membrane-spanning segment. Residues 213-301 (THKRNEYIYD…YTEQNVPVVS (89 aa)) lie on the Extracellular side of the membrane. Residues 254-301 (VQQSQSHQNHRFFKKLRTKKRTVTSAGDEPDRVQEERVYTEQNVPVVS) form a disordered region. Basic residues predominate over residues 261-275 (QNHRFFKKLRTKKRT). Residues 282–292 (EPDRVQEERVY) are compositionally biased toward basic and acidic residues.

This sequence belongs to the SUR7 family.

The protein resides in the cell membrane. In terms of biological role, involved in sporulation and affects the sphingolipid composition of the plasma membrane. This is an uncharacterized protein from Saccharomyces cerevisiae (strain ATCC 204508 / S288c) (Baker's yeast).